We begin with the raw amino-acid sequence, 368 residues long: Aspartate-semialdehyde dehydrogenase (368 aa).

NADP(+) contacts are provided by residues 10–13 (RGMV), 37–38 (TS), and Q74. A phosphate-binding site is contributed by R103. C136 (acyl-thioester intermediate) is an active-site residue. Residue C136 is modified to S-cysteinyl cysteine; in inhibited form. Q163 contacts substrate. NADP(+)-binding positions include 166-167 (SG) and P194. A substrate-binding site is contributed by E242. K245 is a binding site for phosphate. Residue R268 participates in substrate binding. Catalysis depends on H275, which acts as the Proton acceptor. Q351 serves as a coordination point for NADP(+).

Belongs to the aspartate-semialdehyde dehydrogenase family. Homodimer.

The enzyme catalyses L-aspartate 4-semialdehyde + phosphate + NADP(+) = 4-phospho-L-aspartate + NADPH + H(+). It participates in amino-acid biosynthesis; L-lysine biosynthesis via DAP pathway; (S)-tetrahydrodipicolinate from L-aspartate: step 2/4. It functions in the pathway amino-acid biosynthesis; L-methionine biosynthesis via de novo pathway; L-homoserine from L-aspartate: step 2/3. Its pathway is amino-acid biosynthesis; L-threonine biosynthesis; L-threonine from L-aspartate: step 2/5. Its function is as follows. Catalyzes the NADPH-dependent formation of L-aspartate-semialdehyde (L-ASA) by the reductive dephosphorylation of L-aspartyl-4-phosphate. This chain is Aspartate-semialdehyde dehydrogenase, found in Salmonella typhi.